Consider the following 452-residue polypeptide: tRNA modification GTPase MnmE (452 aa).

R21, E78, and K118 together coordinate (6S)-5-formyl-5,6,7,8-tetrahydrofolate. The region spanning 214-375 (GMKVVIAGRP…LREHLKQAMG (162 aa)) is the TrmE-type G domain. N224 serves as a coordination point for K(+). GTP is bound by residues 224–229 (NAGKSS), 243–249 (TDIAGTT), and 268–271 (DTAG). S228 provides a ligand contact to Mg(2+). Residues T243, I245, and T248 each coordinate K(+). Position 249 (T249) interacts with Mg(2+). A (6S)-5-formyl-5,6,7,8-tetrahydrofolate-binding site is contributed by K452.

This sequence belongs to the TRAFAC class TrmE-Era-EngA-EngB-Septin-like GTPase superfamily. TrmE GTPase family. In terms of assembly, homodimer. Heterotetramer of two MnmE and two MnmG subunits. The cofactor is K(+).

Its subcellular location is the cytoplasm. In terms of biological role, exhibits a very high intrinsic GTPase hydrolysis rate. Involved in the addition of a carboxymethylaminomethyl (cmnm) group at the wobble position (U34) of certain tRNAs, forming tRNA-cmnm(5)s(2)U34. In Haemophilus influenzae (strain PittEE), this protein is tRNA modification GTPase MnmE.